The chain runs to 202 residues: Glycerol-3-phosphate acyltransferase (202 aa).

6 consecutive transmembrane segments (helical) span residues 2-22, 54-74, 85-105, 120-140, 141-161, and 162-182; these read MIIV…GFVI, FLVT…PLWL, FFTN…YPVY, VVLG…FIVL, KIFK…VIGS, and LIIQ…ILII.

The protein belongs to the PlsY family. As to quaternary structure, probably interacts with PlsX.

The protein resides in the cell membrane. The enzyme catalyses an acyl phosphate + sn-glycerol 3-phosphate = a 1-acyl-sn-glycero-3-phosphate + phosphate. It functions in the pathway lipid metabolism; phospholipid metabolism. Catalyzes the transfer of an acyl group from acyl-phosphate (acyl-PO(4)) to glycerol-3-phosphate (G3P) to form lysophosphatidic acid (LPA). This enzyme utilizes acyl-phosphate as fatty acyl donor, but not acyl-CoA or acyl-ACP. The chain is Glycerol-3-phosphate acyltransferase from Staphylococcus aureus (strain USA300).